The primary structure comprises 371 residues: DNA repair and recombination protein rti1 (371 aa).

Positions 346 to 371 are disordered; sequence IDHNRSMPIRRPSLTSNNSANTFSTK. Residues 358-371 show a composition bias toward polar residues; sequence SLTSNNSANTFSTK.

It belongs to the RAD52 family. As to quaternary structure, interacts with rph51 and rph54.

Active in the repair of DNA damage and in mating-type switching. Probably involved in the repair of DNA double-strands breaks. Has a role in promoting S phase completion. The sequence is that of DNA repair and recombination protein rti1 (rti1) from Schizosaccharomyces pombe (strain 972 / ATCC 24843) (Fission yeast).